Consider the following 499-residue polypeptide: Phenylalanine--tRNA ligase alpha subunit B (499 aa).

L-phenylalanine-binding positions include Thr330, 373-375 (QIE), and Tyr413. Glu415 lines the Mg(2+) pocket. Residue Phe439 participates in L-phenylalanine binding.

It belongs to the class-II aminoacyl-tRNA synthetase family. Phe-tRNA synthetase alpha subunit type 2 subfamily. Heterotetramer; dimer of two heterodimers formed by alpha and beta subunits. Mg(2+) serves as cofactor.

Its subcellular location is the cytoplasm. It catalyses the reaction tRNA(Phe) + L-phenylalanine + ATP = L-phenylalanyl-tRNA(Phe) + AMP + diphosphate + H(+). The protein is Phenylalanine--tRNA ligase alpha subunit B (farsa-b) of Xenopus laevis (African clawed frog).